A 211-amino-acid chain; its full sequence is uncharacterized protein (211 aa).

The segment at 187–211 (LKVSEQENSEAPVSEPKEDEKTKKD) is disordered. Basic and acidic residues predominate over residues 201 to 211 (EPKEDEKTKKD).

This is an uncharacterized protein from Spiroplasma citri.